The sequence spans 318 residues: Vomeronasal type-1 receptor A11 (318 aa).

The Extracellular segment spans residues 1-32; sequence MSEILFFSPQPLFSHMMNKNSRLHTHSNIKNT. Residues 33 to 53 form a helical membrane-spanning segment; it reads FFSEIGIGISGNSFLLLFHIL. Residues 54–65 lie on the Cytoplasmic side of the membrane; that stretch reads KFIRGHRPRLTD. A helical transmembrane segment spans residues 66–86; the sequence is LPIGLLSLIHLLMLLLMAFIA. The Extracellular segment spans residues 87–101; the sequence is TDIFISRRGWDGIIC. A disulfide bridge connects residues Cys-101 and Cys-188. A helical membrane pass occupies residues 102–118; the sequence is KFLVYLYGVLRGLSLCT. Over 119–147 the chain is Cytoplasmic; the sequence is TSMLSVLQAIILSPRSSCLAKLKHKSPHH. Residues 148–168 traverse the membrane as a helical segment; it reads ISCAIIFLSVLYMLISSHILL. At 169 to 206 the chain is on the extracellular side; the sequence is SITATPNLTMNDFLYVSQSCSLLPLSYLVQSMYSTLLA. N-linked (GlcNAc...) asparagine glycosylation occurs at Asn-175. Residues 207 to 227 form a helical membrane-spanning segment; that stretch reads LREVFLISLMVLSTLYMVVLL. The Cytoplasmic portion of the chain corresponds to 228-254; sequence CRHRKQAQHLQGTSLSPKASAEQRATQ. The helical transmembrane segment at 255–275 threads the bilayer; it reads TILMLMTFFVLMSIFDSIVSC. Topologically, residues 276–285 are extracellular; the sequence is SRTMFLDDPT. A helical transmembrane segment spans residues 286-306; that stretch reads SYSIHIFVMHIYATVSPFVFM. At 307–318 the chain is on the cytoplasmic side; the sequence is STEKHIVNILRG.

The protein belongs to the G-protein coupled receptor 1 family.

It is found in the cell membrane. Putative pheromone receptor implicated in the regulation of social and reproductive behavior. This chain is Vomeronasal type-1 receptor A11, found in Mus musculus (Mouse).